Consider the following 341-residue polypeptide: Glycerol-3-phosphate dehydrogenase [NAD(P)+] (341 aa).

Residues Ser-14, Phe-15, Arg-35, and Lys-108 each contribute to the NADPH site. The sn-glycerol 3-phosphate site is built by Lys-108 and Gly-136. Ala-140 contacts NADPH. Sn-glycerol 3-phosphate is bound by residues Lys-191, Asp-244, Ser-254, Arg-255, and Asn-256. The active-site Proton acceptor is the Lys-191. Arg-255 serves as a coordination point for NADPH. Val-279 and Glu-281 together coordinate NADPH.

The protein belongs to the NAD-dependent glycerol-3-phosphate dehydrogenase family.

It localises to the cytoplasm. It carries out the reaction sn-glycerol 3-phosphate + NAD(+) = dihydroxyacetone phosphate + NADH + H(+). The catalysed reaction is sn-glycerol 3-phosphate + NADP(+) = dihydroxyacetone phosphate + NADPH + H(+). It participates in membrane lipid metabolism; glycerophospholipid metabolism. Functionally, catalyzes the reduction of the glycolytic intermediate dihydroxyacetone phosphate (DHAP) to sn-glycerol 3-phosphate (G3P), the key precursor for phospholipid synthesis. The chain is Glycerol-3-phosphate dehydrogenase [NAD(P)+] from Pseudomonas syringae pv. tomato (strain ATCC BAA-871 / DC3000).